Reading from the N-terminus, the 125-residue chain is Small ribosomal subunit protein eS8 (125 aa).

A disordered region spans residues 1–20 (MLWQGESIRKVTGGRRRPAQ).

It belongs to the eukaryotic ribosomal protein eS8 family. As to quaternary structure, part of the 30S ribosomal subunit.

The chain is Small ribosomal subunit protein eS8 from Methanoregula boonei (strain DSM 21154 / JCM 14090 / 6A8).